The primary structure comprises 92 residues: Small ribosomal subunit protein uS19 (92 aa).

It belongs to the universal ribosomal protein uS19 family.

In terms of biological role, protein S19 forms a complex with S13 that binds strongly to the 16S ribosomal RNA. The sequence is that of Small ribosomal subunit protein uS19 from Mycoplasmopsis agalactiae (strain NCTC 10123 / CIP 59.7 / PG2) (Mycoplasma agalactiae).